A 337-amino-acid chain; its full sequence is Probable allantoicase 1 (337 aa).

Belongs to the allantoicase family.

It catalyses the reaction allantoate + H2O = (S)-ureidoglycolate + urea. It functions in the pathway nitrogen metabolism; (S)-allantoin degradation; (S)-ureidoglycolate from allantoate (aminidohydrolase route): step 1/1. This is Probable allantoicase 1 from Burkholderia mallei (strain ATCC 23344).